Here is a 281-residue protein sequence, read N- to C-terminus: ATP phosphoribosyltransferase (281 aa).

Belongs to the ATP phosphoribosyltransferase family. Long subfamily. It depends on Mg(2+) as a cofactor.

It is found in the cytoplasm. The enzyme catalyses 1-(5-phospho-beta-D-ribosyl)-ATP + diphosphate = 5-phospho-alpha-D-ribose 1-diphosphate + ATP. It participates in amino-acid biosynthesis; L-histidine biosynthesis; L-histidine from 5-phospho-alpha-D-ribose 1-diphosphate: step 1/9. Feedback inhibited by histidine. Its function is as follows. Catalyzes the condensation of ATP and 5-phosphoribose 1-diphosphate to form N'-(5'-phosphoribosyl)-ATP (PR-ATP). Has a crucial role in the pathway because the rate of histidine biosynthesis seems to be controlled primarily by regulation of HisG enzymatic activity. In Kocuria rhizophila (strain ATCC 9341 / DSM 348 / NBRC 103217 / DC2201), this protein is ATP phosphoribosyltransferase.